The primary structure comprises 338 residues: Fructose-1,6-bisphosphatase class 1 (338 aa).

Glu94, Asp116, Leu118, and Asp119 together coordinate Mg(2+). Substrate-binding positions include 119-122 (DGSS), Asn210, and Lys276. Glu282 provides a ligand contact to Mg(2+).

The protein belongs to the FBPase class 1 family. Homotetramer. Requires Mg(2+) as cofactor.

Its subcellular location is the cytoplasm. The catalysed reaction is beta-D-fructose 1,6-bisphosphate + H2O = beta-D-fructose 6-phosphate + phosphate. It functions in the pathway carbohydrate biosynthesis; gluconeogenesis. This is Fructose-1,6-bisphosphatase class 1 from Burkholderia thailandensis (strain ATCC 700388 / DSM 13276 / CCUG 48851 / CIP 106301 / E264).